A 69-amino-acid polypeptide reads, in one-letter code: DNA-directed RNA polymerase subunit epsilon (69 aa).

Belongs to the RNA polymerase subunit epsilon family. In terms of assembly, monomer. RNAP is composed of a core of 2 alpha, a beta and a beta' subunit. The core is associated with a delta subunit, and at least one of epsilon or omega. When a sigma factor is associated with the core the holoenzyme is formed, which can initiate transcription.

It localises to the cytoplasm. The protein resides in the nucleoid. It carries out the reaction RNA(n) + a ribonucleoside 5'-triphosphate = RNA(n+1) + diphosphate. A non-essential component of RNA polymerase (RNAP). Has a similar structure to bacteriophage T7 protein Gp2 (AC P03704), which is known to bind to RNAP in the DNA binding-cleft. Unlike Gp2 however, this protein does not inhibit transcription initiation. In vitro reconstitution experiments show this subunit is dispensible. The polypeptide is DNA-directed RNA polymerase subunit epsilon (Bacillus subtilis (strain 168)).